The following is a 166-amino-acid chain: Lactose-binding lectin l-2 (166 aa).

The signal sequence occupies residues 1-24 (MVSFKLPAFLCVAVLSSMALVSHG). Intrachain disulfides connect cysteine 34–cysteine 45, cysteine 62–cysteine 160, and cysteine 136–cysteine 152. One can recognise a C-type lectin domain in the interval 41–161 (HKNRCYLHVA…CDLLFPSICV (121 aa)).

In terms of assembly, homodimer; disulfide-linked. As to expression, skin; contained within club cells which are a component of the epidermis in combination with epithelial cells and mucus cells (at protein level).

Its subcellular location is the secreted. Involved in host defense at the body surface. Causes agglutination and suppresses the growth of the Gram-negative bacterium E.coli K12. Possesses calcium-independent hemagglutinating activity. This Anguilla japonica (Japanese eel) protein is Lactose-binding lectin l-2.